A 341-amino-acid polypeptide reads, in one-letter code: Phenylalanine--tRNA ligase alpha subunit (341 aa).

Residue Glu-254 participates in Mg(2+) binding.

This sequence belongs to the class-II aminoacyl-tRNA synthetase family. Phe-tRNA synthetase alpha subunit type 1 subfamily. Tetramer of two alpha and two beta subunits. It depends on Mg(2+) as a cofactor.

The protein localises to the cytoplasm. It catalyses the reaction tRNA(Phe) + L-phenylalanine + ATP = L-phenylalanyl-tRNA(Phe) + AMP + diphosphate + H(+). The chain is Phenylalanine--tRNA ligase alpha subunit (pheS) from Mycoplasma pneumoniae (strain ATCC 29342 / M129 / Subtype 1) (Mycoplasmoides pneumoniae).